Reading from the N-terminus, the 188-residue chain is uncharacterized protein (188 aa).

An N-terminal signal peptide occupies residues 1–23 (MVRPKLAFYILPLLLAFLGSALG). Residue N74 is glycosylated (N-linked (GlcNAc...) asparagine).

This is an uncharacterized protein from Mus musculus (Mouse).